Here is a 299-residue protein sequence, read N- to C-terminus: MKKLQYIDRSTNQRVTEVVCYEKTMMFLYTSRLGKGVSTLLSRTPFLSRLYGWIQKRSWTRKKIPGFIKKNRICTKEFKKSISEFTSFNDFFTRELRPEARPIARGDDICVTPVDGAYLIYPNIAEFGEFVVKSKRFSLSKLLGDAKLVEKYASGSVVFARLALFDYHRFHFPVDCLAGPTRNINGYLFSVHPMALKDNFNIFCENKRTLTELKTEKFGDVLYLEVGALNVGSIVQTYTAEKKYSKGNEKGFFEIGGSTVIVLFEPGVIQFDADLLKNSRMGLETRCLMGQSLGRSLRE.

Residues D115, H171, and S258 each act as charge relay system; for autoendoproteolytic cleavage activity in the active site. S258 serves as the catalytic Schiff-base intermediate with substrate; via pyruvic acid; for decarboxylase activity. S258 carries the post-translational modification Pyruvic acid (Ser); by autocatalysis.

Belongs to the phosphatidylserine decarboxylase family. PSD-B subfamily. Prokaryotic type II sub-subfamily. As to quaternary structure, heterodimer of a large membrane-associated beta subunit and a small pyruvoyl-containing alpha subunit. Pyruvate serves as cofactor. In terms of processing, is synthesized initially as an inactive proenzyme. Formation of the active enzyme involves a self-maturation process in which the active site pyruvoyl group is generated from an internal serine residue via an autocatalytic post-translational modification. Two non-identical subunits are generated from the proenzyme in this reaction, and the pyruvate is formed at the N-terminus of the alpha chain, which is derived from the carboxyl end of the proenzyme. The autoendoproteolytic cleavage occurs by a canonical serine protease mechanism, in which the side chain hydroxyl group of the serine supplies its oxygen atom to form the C-terminus of the beta chain, while the remainder of the serine residue undergoes an oxidative deamination to produce ammonia and the pyruvoyl prosthetic group on the alpha chain. During this reaction, the Ser that is part of the protease active site of the proenzyme becomes the pyruvoyl prosthetic group, which constitutes an essential element of the active site of the mature decarboxylase.

The protein resides in the cell membrane. It carries out the reaction a 1,2-diacyl-sn-glycero-3-phospho-L-serine + H(+) = a 1,2-diacyl-sn-glycero-3-phosphoethanolamine + CO2. The protein operates within phospholipid metabolism; phosphatidylethanolamine biosynthesis; phosphatidylethanolamine from CDP-diacylglycerol: step 2/2. Its function is as follows. Catalyzes the formation of phosphatidylethanolamine (PtdEtn) from phosphatidylserine (PtdSer). The protein is Phosphatidylserine decarboxylase proenzyme of Chlamydia caviae (strain ATCC VR-813 / DSM 19441 / 03DC25 / GPIC) (Chlamydophila caviae).